The chain runs to 76 residues: Envelope small membrane protein (76 aa).

Residues 1-14 (MLQLVNDNGLVVNV) lie on the Virion surface side of the membrane. A helical membrane pass occupies residues 15–35 (ILWLFVLFFLLIISITFVQLV). Residues 36-76 (NLCFTCHRLCNSAVYTPIGRLYRVYKSYMRIDPLPSTVIDV) are Intravirion-facing.

It belongs to the alphacoronaviruses E protein family. As to quaternary structure, homopentamer. Interacts with membrane protein M in the budding compartment of the host cell, which is located between endoplasmic reticulum and the Golgi complex. Interacts with Nucleoprotein. Interacts with host IRF3; this interaction inhibits type I IFN production.

The protein localises to the host Golgi apparatus membrane. It localises to the host endoplasmic reticulum. In terms of biological role, plays a central role in virus morphogenesis and assembly. Acts as a viroporin and self-assembles in host membranes forming pentameric protein-lipid pores that allow ion transport. Also plays a role in the induction of apoptosis. Counteracts the production of type I interferon by interacting with host IRF3 component and preventing its translocation to the host nucleus. This Sus scrofa (Pig) protein is Envelope small membrane protein.